The sequence spans 296 residues: UDP-N-acetylenolpyruvoylglucosamine reductase (296 aa).

Positions 18-189 constitute an FAD-binding PCMH-type domain; the sequence is LGGRALAEVR…TGADIVLRRG (172 aa). Residue Arg166 is part of the active site. The active-site Proton donor is Cys218. Residue Glu289 is part of the active site.

Belongs to the MurB family. Requires FAD as cofactor.

Its subcellular location is the cytoplasm. It carries out the reaction UDP-N-acetyl-alpha-D-muramate + NADP(+) = UDP-N-acetyl-3-O-(1-carboxyvinyl)-alpha-D-glucosamine + NADPH + H(+). The protein operates within cell wall biogenesis; peptidoglycan biosynthesis. Its function is as follows. Cell wall formation. In Nitratidesulfovibrio vulgaris (strain ATCC 29579 / DSM 644 / CCUG 34227 / NCIMB 8303 / VKM B-1760 / Hildenborough) (Desulfovibrio vulgaris), this protein is UDP-N-acetylenolpyruvoylglucosamine reductase.